Reading from the N-terminus, the 326-residue chain is MKSIAIIGASGYTGAQITSLINADCNFSVQGLYVSENSLDKGRKLADLYPTYSHMAYTLSPLSDDAKKKIVAEADAVVLATEHSVSLELAAWFYQQGLAVFDLSGAYRFADVAQYPKWYGFEHTHPDVLAQAVYGLAEWNSEQIKQTRMIAVPGCYPTASLTALKPLKPFLTEMYPVINAVSGVTGAGRKAQLHTSFCEVSLTPYGVLGHRHQPEIATHLGQEVIFTPHLGNFKRGILATITVQLKPGTTEADVAKAYSVYDNAPIVTVKHNQFPKVDDVVNTPNCHLGWKYDANSGYLVVASAIDNLMKGAASQGLQCIKIHFGV.

C155 is an active-site residue.

It belongs to the NAGSA dehydrogenase family. Type 1 subfamily.

It is found in the cytoplasm. It carries out the reaction N-acetyl-L-glutamate 5-semialdehyde + phosphate + NADP(+) = N-acetyl-L-glutamyl 5-phosphate + NADPH + H(+). It functions in the pathway amino-acid biosynthesis; L-arginine biosynthesis; N(2)-acetyl-L-ornithine from L-glutamate: step 3/4. Functionally, catalyzes the NADPH-dependent reduction of N-acetyl-5-glutamyl phosphate to yield N-acetyl-L-glutamate 5-semialdehyde. This chain is N-acetyl-gamma-glutamyl-phosphate reductase, found in Shewanella frigidimarina (strain NCIMB 400).